The sequence spans 181 residues: Protein Syd (181 aa).

Belongs to the Syd family.

It localises to the cell inner membrane. Interacts with the SecY protein in vivo. May bind preferentially to an uncomplexed state of SecY, thus functioning either as a chelating agent for excess SecY in the cell or as a regulatory factor that negatively controls the translocase function. The polypeptide is Protein Syd (Escherichia coli O17:K52:H18 (strain UMN026 / ExPEC)).